The sequence spans 103 residues: Nucleoid-associated protein Anae109_3761 (103 aa).

The protein belongs to the YbaB/EbfC family. In terms of assembly, homodimer.

It localises to the cytoplasm. It is found in the nucleoid. Functionally, binds to DNA and alters its conformation. May be involved in regulation of gene expression, nucleoid organization and DNA protection. The chain is Nucleoid-associated protein Anae109_3761 from Anaeromyxobacter sp. (strain Fw109-5).